Consider the following 108-residue polypeptide: Peptidyl-prolyl cis-trans isomerase FKBP1A (108 aa).

Residues 20–108 (GQTCVVHYTG…VFDVELLKLE (89 aa)) form the PPIase FKBP-type domain. At lysine 53 the chain carries N6-acetyllysine; alternate. Position 53 is an N6-succinyllysine; alternate (lysine 53).

This sequence belongs to the FKBP-type PPIase family. FKBP1 subfamily. Interacts with TGFBR1; prevents TGFBR1 phosphorylation by TGFBR2 and stabilizes it in the inactive conformation. Interacts with ACVR1B and SMAD7. Identified in a complex composed of RYR1, PDE4D, PKA, FKBP1A and protein phosphatase 1 (PP1). Interacts directly with RYR2 and RYR3. Interacts with GLMN; rapamycin and FK506 abolish the interaction with GLMN in a dose dependent manner. Interacts directly with RYR1.

The protein localises to the cytoplasm. It localises to the cytosol. The protein resides in the sarcoplasmic reticulum membrane. It catalyses the reaction [protein]-peptidylproline (omega=180) = [protein]-peptidylproline (omega=0). Its activity is regulated as follows. Inhibited by both FK506 and rapamycin. Keeps in an inactive conformation TGFBR1, the TGF-beta type I serine/threonine kinase receptor, preventing TGF-beta receptor activation in absence of ligand. Recruits SMAD7 to ACVR1B which prevents the association of SMAD2 and SMAD3 with the activin receptor complex, thereby blocking the activin signal. May modulate the RYR1 calcium channel activity. PPIases accelerate the folding of proteins. It catalyzes the cis-trans isomerization of proline imidic peptide bonds in oligopeptides. The protein is Peptidyl-prolyl cis-trans isomerase FKBP1A (FKBP1A) of Homo sapiens (Human).